A 92-amino-acid chain; its full sequence is Alpha-conotoxin FrXXA 2 (92 aa).

The signal sequence occupies residues 1–24; the sequence is MPKLEMMLLVLLILPLPYFDAAGG. A propeptide spanning residues 25-45 is cleaved from the precursor; the sequence is QAVQGDGHGDGMDRYLQRDDR. Disulfide bonds link cysteine 63/cysteine 72, cysteine 68/cysteine 80, cysteine 73/cysteine 90, and cysteine 78/cysteine 92.

The protein belongs to the conotoxin D superfamily. In terms of assembly, homodimer; disulfide-linked. In terms of processing, the homodimer contains 10 disulfide bonds. As to expression, expressed by the venom duct.

It localises to the secreted. In terms of biological role, alpha-conotoxins act on postsynaptic membranes, they bind to the nicotinic acetylcholine receptors (nAChR) and thus inhibit them. Through its two C-terminal domains, this homodimeric protein would bind to two nAChR allosteric sites, located outside the nAChR C-loop of the principal binding face and at the adjacent binding interface in a clockwise direction. Component 4b which seems to correspond to this toxin blocks both neuronal and muscular subtypes: human alpha-7/CHRNA7 (IC(50)=125 nM), human alpha-3-beta-2 (CHRNA3-CHRNB2) (IC(50)=282 nM), human alpha-4-beta-2 (CHRNA4-CHRNB2) (IC(50)=697 nM), mouse adult muscular subtype alpha-1-beta-1-delta-epsilon (CHRNA1-CHRNB1-CHRND-CHRNE) (IC(50)=351 nM), and mouse fetal muscular subtype alpha-1-beta-1-gamma-delta (CHRNA1-CHRNB1-CHRNG-CHRND) (IC(50)=447 nM). It shows different dissociation rates towards the different subtypes, with a very slow rate towards alpha-7 subtype (almost irreversible), followed by the adult muscular subtype, the fetal muscular subtype, alpha-3-beta-2 and alpha-4-beta-2 (almost entirely reversible within a few minutes of washing). This chain is Alpha-conotoxin FrXXA 2, found in Conus fergusoni (Ferguson's cone).